Here is a 336-residue protein sequence, read N- to C-terminus: DNA repair protein RAD51 homolog B (336 aa).

A HhH domain is found at 45 to 74 (TVEAVAYAPKKELLNIKGISEAKAEKILAE). 124-131 (GEFRTGKT) is an ATP binding site. The short motif at 242-257 (LARFLRMLLRLADEFG) is the Nuclear export signal element.

Belongs to the RecA family. RAD51 subfamily. In terms of assembly, forms linear homooligomers, giving rise to a RAD51 nucleoprotein filament, which is essential for strand-pairing reactions during DNA recombination.

Its subcellular location is the nucleus. The protein resides in the cytoplasm. It is found in the chromosome. Functionally, plays an important role in homologous strand exchange, a key step in DNA repair through homologous recombination (HR). Binds to single-stranded DNA in an ATP-dependent manner to form nucleoprotein filaments which are essential for the homology search and strand exchange. Catalyzes the recognition of homology and strand exchange between homologous DNA partners to form a joint molecule between a processed DNA break and the repair template. Recruited to resolve stalled replication forks during replication stress. Also involved in interstrand cross-link repair. The sequence is that of DNA repair protein RAD51 homolog B (rad51-b) from Xenopus laevis (African clawed frog).